Here is a 460-residue protein sequence, read N- to C-terminus: tRNA modification GTPase MnmE (460 aa).

(6S)-5-formyl-5,6,7,8-tetrahydrofolate contacts are provided by arginine 29, glutamate 91, and lysine 132. Positions glycine 227–glycine 383 constitute a TrmE-type G domain. K(+) is bound at residue asparagine 237. GTP-binding positions include asparagine 237–serine 242, threonine 256–threonine 262, and aspartate 281–glycine 284. Position 241 (serine 241) interacts with Mg(2+). Positions 256, 258, and 261 each coordinate K(+). Threonine 262 is a binding site for Mg(2+). Lysine 460 provides a ligand contact to (6S)-5-formyl-5,6,7,8-tetrahydrofolate.

It belongs to the TRAFAC class TrmE-Era-EngA-EngB-Septin-like GTPase superfamily. TrmE GTPase family. As to quaternary structure, homodimer. Heterotetramer of two MnmE and two MnmG subunits. K(+) is required as a cofactor.

The protein resides in the cytoplasm. In terms of biological role, exhibits a very high intrinsic GTPase hydrolysis rate. Involved in the addition of a carboxymethylaminomethyl (cmnm) group at the wobble position (U34) of certain tRNAs, forming tRNA-cmnm(5)s(2)U34. The sequence is that of tRNA modification GTPase MnmE from Prochlorococcus marinus (strain MIT 9215).